We begin with the raw amino-acid sequence, 84 residues long: Cell division protein CrgA (84 aa).

2 consecutive transmembrane segments (helical) span residues 31–51 (VAPV…VFYV) and 60–80 (ALDN…FGVS).

It belongs to the CrgA family.

Its subcellular location is the cell membrane. In terms of biological role, involved in cell division. Coordinates growth and cell division. Required for the formation of the sporulation septa. This Streptomyces avermitilis (strain ATCC 31267 / DSM 46492 / JCM 5070 / NBRC 14893 / NCIMB 12804 / NRRL 8165 / MA-4680) protein is Cell division protein CrgA.